The primary structure comprises 165 residues: Nucleotide-binding protein TGRD_519 (165 aa).

The protein belongs to the YajQ family.

Functionally, nucleotide-binding protein. The protein is Nucleotide-binding protein TGRD_519 of Endomicrobium trichonymphae.